Reading from the N-terminus, the 760-residue chain is DNA-directed RNA polymerase subunit beta' (760 aa).

Residues C76, C78, C90, and C93 each coordinate Zn(2+). Mg(2+) contacts are provided by D594, D596, and D598.

This sequence belongs to the RNA polymerase beta' chain family. RpoC1 subfamily. As to quaternary structure, in plastids the minimal PEP RNA polymerase catalytic core is composed of four subunits: alpha, beta, beta', and beta''. When a (nuclear-encoded) sigma factor is associated with the core the holoenzyme is formed, which can initiate transcription. Requires Mg(2+) as cofactor. The cofactor is Zn(2+).

It is found in the plastid. The protein resides in the chloroplast. The catalysed reaction is RNA(n) + a ribonucleoside 5'-triphosphate = RNA(n+1) + diphosphate. Functionally, DNA-dependent RNA polymerase catalyzes the transcription of DNA into RNA using the four ribonucleoside triphosphates as substrates. The chain is DNA-directed RNA polymerase subunit beta' from Bigelowiella natans (Pedinomonas minutissima).